We begin with the raw amino-acid sequence, 1232 residues long: DNA-directed RNA polymerase subunit beta (1232 aa).

Residues 1170–1232 (SVDEDADELE…LDLDDFGDEH (63 aa)) are disordered. Over residues 1171-1180 (VDEDADELEV) the composition is skewed to acidic residues. The span at 1189–1198 (PEEKEEKEKE) shows a compositional bias: basic and acidic residues. A compositionally biased stretch (acidic residues) spans 1199 to 1232 (DSDEYDDLREEDVEPDLEELSLDDLDLDDFGDEH).

Belongs to the RNA polymerase beta chain family. As to quaternary structure, the RNAP catalytic core consists of 2 alpha, 1 beta, 1 beta' and 1 omega subunit. When a sigma factor is associated with the core the holoenzyme is formed, which can initiate transcription.

The enzyme catalyses RNA(n) + a ribonucleoside 5'-triphosphate = RNA(n+1) + diphosphate. Its function is as follows. DNA-dependent RNA polymerase catalyzes the transcription of DNA into RNA using the four ribonucleoside triphosphates as substrates. The chain is DNA-directed RNA polymerase subunit beta from Clostridium botulinum (strain Hall / ATCC 3502 / NCTC 13319 / Type A).